A 399-amino-acid polypeptide reads, in one-letter code: Bombesin receptor subtype-3 (399 aa).

Residues 1-41 are Extracellular-facing; that stretch reads MSQRQSQSPNQTLISITNDTETSSSVVSNDTTHKGWTGDNS. N-linked (GlcNAc...) asparagine glycosylation is found at asparagine 10, asparagine 18, and asparagine 29. The chain crosses the membrane as a helical span at residues 42–63; the sequence is PGIEALCAIYITYAGIISVGIL. Over 64 to 82 the chain is Cytoplasmic; sequence GNAILIKVFFKTKSMQTVP. A helical transmembrane segment spans residues 83-103; it reads NIFITSLAFGDLLLLLTCVPV. Residues 104–121 are Extracellular-facing; it reads DATHYLAEGWLFGKVGCK. Cysteine 120 and cysteine 203 are disulfide-bonded. The chain crosses the membrane as a helical span at residues 122–143; it reads VLSFIRLTSVGVSVFTLTILSA. Over 144 to 163 the chain is Cytoplasmic; the sequence is DRYKAVVKPLERQPPNAILK. A helical membrane pass occupies residues 164 to 184; it reads TCAKAGGIWIVSMIFALPEAI. Topologically, residues 185 to 220 are extracellular; the sequence is FSNVYTFQDPNRNVTFESCNSYPISERLLQEIHSLL. A helical transmembrane segment spans residues 221-241; the sequence is CFLVFYIIPLSIISVYYSLIA. Topologically, residues 242-272 are cytoplasmic; that stretch reads RTLYKSTLNIPTEEQSHARKQIESRKRIAKT. A helical membrane pass occupies residues 273–293; that stretch reads VLVLVALFALCWLPNHLLYLY. Topologically, residues 294–313 are extracellular; it reads HSFTYESYANHSDVPFVIII. A helical membrane pass occupies residues 314-333; sequence FSRVLAFSNSCVNPFALYWL. The Cytoplasmic portion of the chain corresponds to 334-399; the sequence is SKTFQQHFKA…SSAKKGEDKV (66 aa). Cysteine 347 carries the S-palmitoyl cysteine lipid modification.

This sequence belongs to the G-protein coupled receptor 1 family. Interacts with C6orf89.

The protein resides in the cell membrane. Its function is as follows. Role in sperm cell division, maturation, or function. This receptor mediates its action by association with G proteins that activate a phosphatidylinositol-calcium second messenger system. The sequence is that of Bombesin receptor subtype-3 (Brs3) from Mus musculus (Mouse).